The following is a 742-amino-acid chain: Catalase-peroxidase (742 aa).

The disordered stretch occupies residues 1 to 43 (MSDSCPVAHEGNTQSTSESENPVIPSPTPAANRPRNNRDWWPN). Positions 11–20 (GNTQSTSESE) are enriched in polar residues. Residues 109 to 231 (WHAAGTYRIA…LGAVQMGLIY (123 aa)) constitute a cross-link (tryptophyl-tyrosyl-methioninium (Trp-Tyr) (with M-257)). Catalysis depends on histidine 110, which acts as the Proton acceptor. The tryptophyl-tyrosyl-methioninium (Tyr-Met) (with W-109) cross-link spans 231-257 (YVNPEGPNGQPDPLAAARDIRETFSRM). Histidine 272 lines the heme b pocket.

This sequence belongs to the peroxidase family. Peroxidase/catalase subfamily. Homodimer or homotetramer. It depends on heme b as a cofactor. Formation of the three residue Trp-Tyr-Met cross-link is important for the catalase, but not the peroxidase activity of the enzyme.

It carries out the reaction H2O2 + AH2 = A + 2 H2O. The catalysed reaction is 2 H2O2 = O2 + 2 H2O. Its function is as follows. Bifunctional enzyme with both catalase and broad-spectrum peroxidase activity. The protein is Catalase-peroxidase of Rhodococcus jostii (strain RHA1).